A 133-amino-acid chain; its full sequence is Interleukin-5 (133 aa).

A signal peptide spans 1 to 20; sequence MRRMLLHLSVLTLSCVWATA. N-linked (GlcNAc...) asparagine glycosylation is found at Asn-46, Asn-75, and Asn-89.

This sequence belongs to the IL-5 family. Homodimer; disulfide-linked. Interacts with IL5RA. Interacts with CSF2RB. Expressed in lymphoid cells, including spleen, thymus, lymph nodes and peripheral blood mononuclear cells.

The protein localises to the secreted. Its function is as follows. Homodimeric cytokine expressed predominantly by T-lymphocytes and NK cells that plays an important role in the survival, differentiation, and chemotaxis of eosinophils. Also acts on activated and resting B-cells to induce immunoglobulin production, growth, and differentiation. Mechanistically, exerts its biological effects through a receptor composed of IL5RA subunit and the cytokine receptor common subunit beta/CSF2RB. Binding to the receptor leads to activation of various kinases including LYN, SYK and JAK2 and thereby propagates signals through the RAS-MAPK and JAK-STAT5 pathways respectively. This Mus musculus (Mouse) protein is Interleukin-5 (Il5).